The sequence spans 116 residues: Neuropeptide Y receptor type 1 (116 aa).

The helical transmembrane segment at 1–6 threads the bilayer; the sequence is LVLIAV. Over 7–24 the chain is Cytoplasmic; sequence ERHQLIINPRGWRPSNRH. A helical membrane pass occupies residues 25-45; that stretch reads AYVGIAVIWVLAVASSLPFLI. Topologically, residues 46 to 81 are extracellular; that stretch reads YQVLTDEPFQNVTLDAFKDKYVCFDKFPSDSHRLSY. N56 carries N-linked (GlcNAc...) asparagine glycosylation. A helical transmembrane segment spans residues 82–102; that stretch reads TTLLLVLQYFGPLCFIFICYF. Residues 103–116 are Cytoplasmic-facing; sequence KIYIRLKRRNNMMD.

The protein belongs to the G-protein coupled receptor 1 family.

It localises to the cell membrane. Receptor for neuropeptide Y and peptide YY. The chain is Neuropeptide Y receptor type 1 (NPY1R) from Ovis aries (Sheep).